A 639-amino-acid polypeptide reads, in one-letter code: Envelope glycoprotein (639 aa).

A signal peptide spans 1–34 (MESPTHPKPSKDKTFPWNLVFLVGILFQIDMGMA). The Extracellular segment spans residues 35 to 583 (NPSPHQVYNV…FNKSPWFTTL (549 aa)). Asn-43 and Asn-58 each carry an N-linked (GlcNAc...) asparagine; by host glycan. 2 disulfide bridges follow: Cys-122-Cys-144 and Cys-136-Cys-149. A disordered region spans residues 232–278 (QAMGPNLVLPDQKPPSRQSQTKSKVTTQRPQITSSTPRSVASATMGP). Residues 246–273 (PSRQSQTKSKVTTQRPQITSSTPRSVAS) show a composition bias toward polar residues. N-linked (GlcNAc...) asparagine; by host glycosylation is found at Asn-299 and Asn-304. 3 disulfides stabilise this stretch: Cys-309–Cys-312, Cys-309–Cys-536, and Cys-528–Cys-535. A CXXC motif is present at residues 309 to 312 (CWLC). N-linked (GlcNAc...) asparagine; by host glycosylation is found at Asn-328, Asn-331, Asn-387, and Asn-407. The segment at 445–465 (ISLTVALMLGGLTVGGIAAGV) is fusion peptide. 2 coiled-coil regions span residues 473–522 (LETA…ILFL) and 532–568 (KEEC…SQQG). Residues 511-527 (LQNRRGLDILFLQEGGL) form an immunosuppression region. A CX6CC motif is present at residues 528 to 536 (CAALKEECC). Residues 584 to 604 (ISSIMGPLLILLLILLLGPCI) form a helical membrane-spanning segment. Cys-603 carries S-palmitoyl cysteine; by host lipidation. The Cytoplasmic segment spans residues 605–639 (LNRLVQFVKDRISVVQALILTQQYQQIQQYDSDRP).

As to quaternary structure, the mature envelope protein (Env) consists of a trimer of SU-TM heterodimers attached by a labile interchain disulfide bond. Post-translationally, specific enzymatic cleavages in vivo yield mature proteins. Envelope glycoproteins are synthesized as an inactive precursor that is N-glycosylated and processed likely by host cell furin or by a furin-like protease in the Golgi to yield the mature SU and TM proteins. The cleavage site between SU and TM requires the minimal sequence [KR]-X-[KR]-R. The R-peptide is released from the C-terminus of the cytoplasmic tail of the TM protein upon particle formation as a result of proteolytic cleavage by the viral protease. Cleavage of this peptide is required for TM to become fusogenic. In terms of processing, the CXXC motif is highly conserved across a broad range of retroviral envelope proteins. It is thought to participate in the formation of a labile disulfide bond possibly with the CX6CC motif present in the transmembrane protein. Isomerization of the intersubunit disulfide bond to an SU intrachain disulfide bond is thought to occur upon receptor recognition in order to allow membrane fusion. The transmembrane protein is palmitoylated. Post-translationally, the R-peptide is palmitoylated.

The protein resides in the virion membrane. It localises to the host cell membrane. The surface protein (SU) attaches the virus to the host cell by binding to its receptor. This interaction triggers the refolding of the transmembrane protein (TM) and is thought to activate its fusogenic potential by unmasking its fusion peptide. Fusion occurs at the host cell plasma membrane. Functionally, the transmembrane protein (TM) acts as a class I viral fusion protein. Under the current model, the protein has at least 3 conformational states: pre-fusion native state, pre-hairpin intermediate state, and post-fusion hairpin state. During viral and target cell membrane fusion, the coiled coil regions (heptad repeats) assume a trimer-of-hairpins structure, positioning the fusion peptide in close proximity to the C-terminal region of the ectodomain. The formation of this structure appears to drive apposition and subsequent fusion of viral and target cell membranes. Membranes fusion leads to delivery of the nucleocapsid into the cytoplasm. This Feline leukemia virus (strain C/Sarma) protein is Envelope glycoprotein (env).